Here is a 378-residue protein sequence, read N- to C-terminus: Queuine tRNA-ribosyltransferase (378 aa).

D89 acts as the Proton acceptor in catalysis. Substrate is bound by residues 89-93, D143, Q187, and G214; that span reads DSGGF. Residues 245–251 are RNA binding; the sequence is GVGKPED. Residue D264 is the Nucleophile of the active site. The tract at residues 269 to 273 is RNA binding; important for wobble base 34 recognition; that stretch reads TRNAR. C302, C304, C307, and H333 together coordinate Zn(2+).

Belongs to the queuine tRNA-ribosyltransferase family. In terms of assembly, homodimer. Within each dimer, one monomer is responsible for RNA recognition and catalysis, while the other monomer binds to the replacement base PreQ1. Requires Zn(2+) as cofactor.

The catalysed reaction is 7-aminomethyl-7-carbaguanine + guanosine(34) in tRNA = 7-aminomethyl-7-carbaguanosine(34) in tRNA + guanine. It participates in tRNA modification; tRNA-queuosine biosynthesis. Functionally, catalyzes the base-exchange of a guanine (G) residue with the queuine precursor 7-aminomethyl-7-deazaguanine (PreQ1) at position 34 (anticodon wobble position) in tRNAs with GU(N) anticodons (tRNA-Asp, -Asn, -His and -Tyr). Catalysis occurs through a double-displacement mechanism. The nucleophile active site attacks the C1' of nucleotide 34 to detach the guanine base from the RNA, forming a covalent enzyme-RNA intermediate. The proton acceptor active site deprotonates the incoming PreQ1, allowing a nucleophilic attack on the C1' of the ribose to form the product. After dissociation, two additional enzymatic reactions on the tRNA convert PreQ1 to queuine (Q), resulting in the hypermodified nucleoside queuosine (7-(((4,5-cis-dihydroxy-2-cyclopenten-1-yl)amino)methyl)-7-deazaguanosine). This is Queuine tRNA-ribosyltransferase from Yersinia enterocolitica serotype O:8 / biotype 1B (strain NCTC 13174 / 8081).